Here is a 1175-residue protein sequence, read N- to C-terminus: Potassium/sodium hyperpolarization-activated cyclic nucleotide-gated channel 4 (1175 aa).

Topologically, residues methionine 1–tyrosine 259 are cytoplasmic. A disordered region spans residues glutamine 17–aspartate 186. The span at methionine 26–glycine 36 shows a compositional bias: acidic residues. Positions proline 60–alanine 75 are enriched in low complexity. The segment covering serine 111 to histidine 126 has biased composition (gly residues). Over residues histidine 128 to alanine 140 the composition is skewed to basic and acidic residues. The residue at position 145 (serine 145) is a Phosphoserine. Residues proline 162 to valine 175 show a composition bias toward pro residues. Residues serine 260 to phenylalanine 288 traverse the membrane as a helical segment. The Extracellular segment spans residues lysine 289–asparagine 292. The chain crosses the membrane as a helical span at residues threonine 293–arginine 316. Residues threonine 317–leucine 329 are Cytoplasmic-facing. The helical transmembrane segment at aspartate 330–proline 352 threads the bilayer. Residues valine 353–alanine 374 lie on the Extracellular side of the membrane. The helical; Voltage-sensor transmembrane segment at leucine 375 to tyrosine 410 threads the bilayer. Residues aspartate 411–alanine 413 are Cytoplasmic-facing. Residues serine 414–glutamine 444 traverse the membrane as a helical segment. The Extracellular segment spans residues aspartate 445–aspartate 449. Positions cysteine 450–leucine 478 form an intramembrane region, pore-forming. Residues cysteine 479 to methionine 488 are Extracellular-facing. Residues glycine 489–leucine 521 traverse the membrane as a helical segment. At aspartate 522–leucine 1175 the chain is on the cytoplasmic side. Positions 560, 563, 565, and 567 each coordinate 3',5'-cyclic GMP. 7 residues coordinate 3',5'-cyclic AMP: glycine 660, glutamate 661, cysteine 663, arginine 670, threonine 671, valine 674, and arginine 711. 2 disordered regions span residues alanine 801 to threonine 820 and leucine 830 to leucine 1175. Low complexity-rich tracts occupy residues serine 839–serine 854, leucine 900–leucine 912, serine 948–glycine 966, and arginine 984–glycine 1004. Residues alanine 1038 to proline 1050 are compositionally biased toward pro residues. Serine 1089 and serine 1093 each carry phosphoserine. Pro residues predominate over residues proline 1102–alanine 1114.

This sequence belongs to the potassium channel HCN family. As to quaternary structure, homotetramer. The channel is composed of a homo- or heterotetrameric complex of pore-forming subunits. Interacts with PEX5L with a 4:4 HCN4:PEX5L stoichiometry; reduces the effects of cAMP on the voltage-dependence and rate of activation. Interacts with IRAG1; regulates HCN4 channel activity. Interacts with IRAG2; regulates HCN4 channel activity. Post-translationally, S-palmitoylated. Highly expressed in the heart sinoatrial node (SAN). Not detected in atrium, ventricle, forebrain or cerebellum. Detected at very low levels in total brain.

It is found in the cell membrane. The catalysed reaction is K(+)(in) = K(+)(out). It carries out the reaction Na(+)(in) = Na(+)(out). With respect to regulation, activated by cAMP and to a lesser extent by cGMP and cCMP. cAMP binding causes a conformation change that leads to the assembly of an active tetramer and channel opening by shifting the voltage-dependency towards more positive voltages. Binding of cAMP removes a tonic inhibition conferred by cyclic nucleotide-binding domain (CNBD) on channel opening. Cyclic dinucleotides can modulate HCN4 channel; cyclic dinucleotides acting as potent antagonists of cAMP. Inhibited by extracellular Cs(+) ions. Auxiliary subunits can also regulate HCN4 channel. IRAG1 causes a gain-of-function by shifting HCN4 activation to more depolarized membrane potentials in the absence of cAMP. In contrast, IRAG2 causes a loss-of-function by inhibiting cAMP-dependent potentiation of HCN4 activation. Functionally, hyperpolarization-activated ion channel that are permeable to Na(+) and K(+) ions with very slow activation and inactivation. Exhibits higher selectivity for K(+) over Na(+) ions. Contributes to the native pacemaker currents in heart (If) that regulate the rhythm of heart beat. Contributes to the native pacemaker currents in neurons (Ih). May mediate responses to sour stimuli. This Oryctolagus cuniculus (Rabbit) protein is Potassium/sodium hyperpolarization-activated cyclic nucleotide-gated channel 4 (HCN4).